Here is a 138-residue protein sequence, read N- to C-terminus: Large ribosomal subunit protein mL54 (138 aa).

A mitochondrion-targeting transit peptide spans 1-14; that stretch reads MATKRLFGATRTWA.

The protein belongs to the mitochondrion-specific ribosomal protein mL54 family. Component of the mitochondrial large ribosomal subunit (mt-LSU). Mature mammalian 55S mitochondrial ribosomes consist of a small (28S) and a large (39S) subunit. The 28S small subunit contains a 12S ribosomal RNA (12S mt-rRNA) and 30 different proteins. The 39S large subunit contains a 16S rRNA (16S mt-rRNA), a copy of mitochondrial valine transfer RNA (mt-tRNA(Val)), which plays an integral structural role, and 52 different proteins.

The protein resides in the mitochondrion. The protein is Large ribosomal subunit protein mL54 (MRPL54) of Homo sapiens (Human).